The sequence spans 854 residues: Selenocysteine insertion sequence-binding protein 2 (854 aa).

Disordered regions lie at residues 332–351, 356–394, 417–445, and 488–619; these read ADPK…DPSY, HIIH…KYEV, ERRD…KKSQ, and ECAS…PNHT. 2 stretches are compositionally biased toward polar residues: residues 338–350 and 361–372; these read SIPS…SDPS and TQKSKASQGSDL. The Nuclear localization signal signature appears at 380 to 387; sequence KNKKKKEK. Polar residues predominate over residues 426-445; that stretch reads KFQSKQQPQDNFKNNVKKSQ. Residues 536–547 show a composition bias toward basic and acidic residues; sequence ILKERQERKQRL. Residues 548-559 show a composition bias toward polar residues; it reads QENAVSPAFTSD. A compositionally biased stretch (acidic residues) spans 560–572; that stretch reads DTQDGESGGDDQF. The segment covering 593 to 611 has biased composition (basic and acidic residues); sequence VEDKSEEPPGTELQRDTEA. The segment at 673–694 is RNA-binding; sequence LVLGLREVLKHLKLKKLKCVII. The tract at residues 787 to 812 is disordered; the sequence is EPRPQAPPSLPTQGPSCPAEDGPPAL.

As to expression, expressed at high levels in testis.

The protein localises to the nucleus. It localises to the mitochondrion. Functionally, mRNA-binding protein that binds to the SECIS (selenocysteine insertion sequence) element present in the 3'-UTR of mRNAs encoding selenoproteins and facilitates the incorporation of the rare amino acid selenocysteine. Insertion of selenocysteine at UGA codons is mediated by SECISBP2 and EEFSEC: SECISBP2 (1) specifically binds the SECIS sequence once the 80S ribosome encounters an in-frame UGA codon and (2) contacts the RPS27A/eS31 of the 40S ribosome before ribosome stalling. (3) GTP-bound EEFSEC then delivers selenocysteinyl-tRNA(Sec) to the 80S ribosome and adopts a preaccommodated state conformation. (4) After GTP hydrolysis, EEFSEC dissociates from the assembly, selenocysteinyl-tRNA(Sec) accommodates, and peptide bond synthesis and selenoprotein elongation occur. The polypeptide is Selenocysteine insertion sequence-binding protein 2 (Homo sapiens (Human)).